Reading from the N-terminus, the 88-residue chain is Alpha-latrotoxin associated low molecular weight protein 2 (88 aa).

Positions 1–19 (MLKLICIVFLVTVLTFVVG) are cleaved as a signal peptide. Intrachain disulfides connect Cys30–Cys66, Cys46–Cys62, and Cys49–Cys75.

Belongs to the arthropod CHH/MIH/GIH/VIH hormone family. In terms of tissue distribution, expressed by the venom gland.

Its subcellular location is the secreted. Functionally, may increase the toxicity of alpha-latrotoxin and/or other venom components. Is non-toxic to mice and to the cockroach Periplaneta americana. This is Alpha-latrotoxin associated low molecular weight protein 2 from Latrodectus geometricus (Brown widow spider).